Here is a 637-residue protein sequence, read N- to C-terminus: tRNA-dihydrouridine(47) synthase [NAD(P)(+)]-like (637 aa).

Disordered regions lie at residues 1–21 (MAET…ACER), 41–63 (LDGD…EPGA), and 85–105 (ERQV…VKPA). Residues 89–104 (PKRARGQNKSRPHVKP) are compositionally biased toward basic residues. 2 C3H1-type zinc fingers span residues 107-137 (YDKD…HDVG) and 145-175 (ADLG…HLGP). Threonine 260 carries the phosphothreonine modification. A phosphoserine mark is found at serine 263 and serine 264. FMN is bound by residues 298-300 (PLT) and glutamine 352. The Proton donor role is filled by cysteine 383. Lysine 403 is covalently cross-linked (Glycyl lysine isopeptide (Lys-Gly) (interchain with G-Cter in SUMO2)). Residues lysine 422, histidine 452, 484–486 (NGD), and 507–508 (AR) each bind FMN.

Belongs to the Dus family. Dus3 subfamily. FMN serves as cofactor.

The enzyme catalyses 5,6-dihydrouridine(47) in tRNA + NAD(+) = uridine(47) in tRNA + NADH + H(+). The catalysed reaction is 5,6-dihydrouridine(47) in tRNA + NADP(+) = uridine(47) in tRNA + NADPH + H(+). It carries out the reaction a 5,6-dihydrouridine in mRNA + NAD(+) = a uridine in mRNA + NADH + H(+). It catalyses the reaction a 5,6-dihydrouridine in mRNA + NADP(+) = a uridine in mRNA + NADPH + H(+). Functionally, catalyzes the synthesis of dihydrouridine, a modified base, in various RNAs, such as tRNAs, mRNAs and some long non-coding RNAs (lncRNAs). Mainly modifies the uridine in position 47 (U47) in the D-loop of most cytoplasmic tRNAs. Also able to mediate the formation of dihydrouridine in some mRNAs, thereby regulating their translation. The sequence is that of tRNA-dihydrouridine(47) synthase [NAD(P)(+)]-like from Mus musculus (Mouse).